The chain runs to 328 residues: Neuronal membrane glycoprotein M6-b (328 aa).

A disordered region spans residues 1 to 22 (MKPAMETAAEENTEQSQERKVN). A helical membrane pass occupies residues 71–91 (GGVPYASLVATILCFSGVALF). The N-linked (GlcNAc...) asparagine glycan is linked to Asn-113. Transmembrane regions (helical) follow at residues 130–150 (VIYGIASFFFLYGIILLAEGF) and 176–196 (FVFLTYVLGVAWLGVFGFSAV). An N-linked (GlcNAc...) asparagine glycan is attached at Asn-217. The chain crosses the membrane as a helical span at residues 265-285 (FIVACAGAGATVIALIHFLMI). Phosphoserine occurs at positions 318, 320, and 326.

This sequence belongs to the myelin proteolipid protein family. In terms of assembly, interacts with SERT. As to expression, widely expressed. In the brain, expressed in neurons and oligodendrocytes.

It localises to the membrane. It is found in the cell membrane. May be involved in neural development. Involved in regulation of osteoblast function and bone formation. Involved in matrix vesicle release by osteoblasts; this function seems to involve maintenance of the actin cytoskeleton. May be involved in cellular trafficking of SERT and thereby in regulation of serotonin uptake. This Mus musculus (Mouse) protein is Neuronal membrane glycoprotein M6-b (Gpm6b).